We begin with the raw amino-acid sequence, 130 residues long: MFDGLSTYKSFFLVAFGAVPGAICRMKISDNLFRNKHNLWGILLVNSSACLLLGFFLAKQNYIHYINNDQPLYLLLCVGFLGSFSTFSSLILEIYYLFVDQQWMELFLFTFTSIGLGIIFISLGSHLFNA.

The next 4 helical transmembrane spans lie at 4 to 24, 38 to 58, 72 to 92, and 103 to 123; these read GLST…GAIC, NLWG…FFLA, LYLL…SLIL, and WMEL…FISL. Positions 82 and 85 each coordinate Na(+).

It belongs to the fluoride channel Fluc/FEX (TC 1.A.43) family.

The protein localises to the cell inner membrane. The enzyme catalyses fluoride(in) = fluoride(out). With respect to regulation, na(+) is not transported, but it plays an essential structural role and its presence is essential for fluoride channel function. Functionally, fluoride-specific ion channel. Important for reducing fluoride concentration in the cell, thus reducing its toxicity. The sequence is that of Fluoride-specific ion channel FluC 2 from Prochlorococcus marinus (strain SARG / CCMP1375 / SS120).